We begin with the raw amino-acid sequence, 141 residues long: Nucleoside diphosphate kinase (141 aa).

Residues Lys-11, Phe-59, Arg-87, Thr-93, Arg-104, and Asn-114 each contribute to the ATP site. His-117 acts as the Pros-phosphohistidine intermediate in catalysis.

Belongs to the NDK family. As to quaternary structure, homotetramer. Mg(2+) is required as a cofactor.

The protein resides in the cytoplasm. It catalyses the reaction a 2'-deoxyribonucleoside 5'-diphosphate + ATP = a 2'-deoxyribonucleoside 5'-triphosphate + ADP. The catalysed reaction is a ribonucleoside 5'-diphosphate + ATP = a ribonucleoside 5'-triphosphate + ADP. In terms of biological role, major role in the synthesis of nucleoside triphosphates other than ATP. The ATP gamma phosphate is transferred to the NDP beta phosphate via a ping-pong mechanism, using a phosphorylated active-site intermediate. The sequence is that of Nucleoside diphosphate kinase from Hamiltonella defensa subsp. Acyrthosiphon pisum (strain 5AT).